A 288-amino-acid chain; its full sequence is Scolexin B (288 aa).

Residues 1–20 (MFASKLAVCSALALLAVAHA) form the signal peptide. Residues 21 to 287 (APGGNDIQKI…VRDWIKKVTN (267 aa)) enclose the Peptidase S1 domain. A disordered region spans residues 27-56 (IQKITKAPNVPTKAEGDAASKASAPAIPPK). The cysteines at positions 72 and 88 are disulfide-linked. Residues histidine 87 and aspartate 145 each act as charge relay system in the active site. 2 cysteine pairs are disulfide-bonded: cysteine 210–cysteine 223 and cysteine 235–cysteine 264. Serine 239 acts as the Charge relay system in catalysis.

This sequence belongs to the peptidase S1 family.

The protein is Scolexin B of Heliothis virescens (Tobacco budworm moth).